The following is a 137-amino-acid chain: Small ribosomal subunit protein uS9 (137 aa).

The tract at residues glutamate 100–arginine 137 is disordered. Over residues lysine 118–arginine 137 the composition is skewed to basic residues.

Belongs to the universal ribosomal protein uS9 family.

This is Small ribosomal subunit protein uS9 from Microcystis aeruginosa (strain NIES-843 / IAM M-2473).